The sequence spans 494 residues: Tripartite motif-containing protein 5 (494 aa).

Ala2 bears the N-acetylalanine mark. Residues 15-59 form an RING-type zinc finger; it reads CPICLELLTQPLSLDCGHSFCQACLTANHKTSMPDEGERSCPVCR. Position 86 is a phosphoserine (Ser86). Residues 91 to 133 form a B box-type zinc finger; the sequence is QKVDHCARHGEKLLLFCREDRKVICWLCERSQEHRGHHTFLTE. Residues Cys96, His99, Cys118, and His124 each contribute to the Zn(2+) site. A coiled-coil region spans residues 132-241; the sequence is TEEVAQEYQV…LISDLEHRLQ (110 aa). The segment at 186 to 199 is required for interaction with GABARAP and for autophagy; it reads FEQLRHILDWVESN. Residues 282 to 494 form the B30.2/SPRY domain; the sequence is LKVMLKKLRE…VPMTLCSPSS (213 aa).

The protein belongs to the TRIM/RBCC family. In terms of assembly, can form homodimers and homotrimers. In addition to lower-order dimerization, also exhibits a higher-order multimerization and both low- and high-order multimerizations are essential for its restriction activity. Interacts with BTBD1 and BTBD2. Interacts with PSMC4, PSMC5, PSMD7 and HSPA8/HSC70. Interacts (via B30.2/SPRY domain) with HSPA1A/B. Interacts with PSMC2, MAP3K7/TAK1, TAB2 and TAB3. Interacts with SQSTM1. Interacts with TRIM6 and TRIM34. Interacts with ULK1 (phosphorylated form), GABARAP, GABARAPL1, GABARAPL2, MAP1LC3A, MAP1LC3C and BECN1. In terms of processing, degraded in a proteasome-independent fashion in the absence of viral infection but in a proteasome-dependent fashion following exposure to restriction sensitive virus. Autoubiquitinated in a RING finger- and UBE2D2-dependent manner. Monoubiquitinated by TRIM21. Deubiquitinated by Yersinia YopJ. Ubiquitination may not lead to proteasomal degradation.

Its subcellular location is the cytoplasm. It localises to the nucleus. It catalyses the reaction S-ubiquitinyl-[E2 ubiquitin-conjugating enzyme]-L-cysteine + [acceptor protein]-L-lysine = [E2 ubiquitin-conjugating enzyme]-L-cysteine + N(6)-ubiquitinyl-[acceptor protein]-L-lysine.. Its pathway is protein modification; protein ubiquitination. In terms of biological role, capsid-specific restriction factor that prevents infection from non-host-adapted retroviruses. Blocks viral replication early in the life cycle, after viral entry but before reverse transcription. In addition to acting as a capsid-specific restriction factor, also acts as a pattern recognition receptor that activates innate immune signaling in response to the retroviral capsid lattice. Binding to the viral capsid triggers its E3 ubiquitin ligase activity, and in concert with the heterodimeric ubiquitin conjugating enzyme complex UBE2V1-UBE2N (also known as UBC13-UEV1A complex) generates 'Lys-63'-linked polyubiquitin chains, which in turn are catalysts in the autophosphorylation of the MAP3K7/TAK1 complex (includes TAK1, TAB2, and TAB3). Activation of the MAP3K7/TAK1 complex by autophosphorylation results in the induction and expression of NF-kappa-B and MAPK-responsive inflammatory genes, thereby leading to an innate immune response in the infected cell. Plays a role in regulating autophagy through activation of autophagy regulator BECN1 by causing its dissociation from its inhibitors BCL2 and TAB2. This Nomascus leucogenys (Northern white-cheeked gibbon) protein is Tripartite motif-containing protein 5 (TRIM5).